The sequence spans 198 residues: MTARLVLASNNAKKAVEMTTLLAPLGIEVLPQSAFDIPEADEPHPTFVENALAKARHAAALSGLPAVADDSGLCVAALGGAPGVQSARFAGEPKSDARNNALLVERLAGSADRRAFFYSVVALVRHADDPRPLIADGEWHGTILYAPRGANGFGYDPLFFLPELGQTAAELDAQLKNTLSHRGAAMRHLLARLSTAPL.

9–14 (SNNAKK) is a substrate binding site. Positions 41 and 70 each coordinate Mg(2+). Aspartate 70 serves as the catalytic Proton acceptor. Residues serine 71, 153 to 156 (FGYD), lysine 176, and 181 to 182 (HR) each bind substrate.

Belongs to the HAM1 NTPase family. Homodimer. Requires Mg(2+) as cofactor.

The enzyme catalyses XTP + H2O = XMP + diphosphate + H(+). The catalysed reaction is dITP + H2O = dIMP + diphosphate + H(+). It catalyses the reaction ITP + H2O = IMP + diphosphate + H(+). Pyrophosphatase that catalyzes the hydrolysis of nucleoside triphosphates to their monophosphate derivatives, with a high preference for the non-canonical purine nucleotides XTP (xanthosine triphosphate), dITP (deoxyinosine triphosphate) and ITP. Seems to function as a house-cleaning enzyme that removes non-canonical purine nucleotides from the nucleotide pool, thus preventing their incorporation into DNA/RNA and avoiding chromosomal lesions. This Aromatoleum aromaticum (strain DSM 19018 / LMG 30748 / EbN1) (Azoarcus sp. (strain EbN1)) protein is dITP/XTP pyrophosphatase.